Reading from the N-terminus, the 295-residue chain is Glycine--tRNA ligase alpha subunit (295 aa).

This sequence belongs to the class-II aminoacyl-tRNA synthetase family. As to quaternary structure, tetramer of two alpha and two beta subunits.

It localises to the cytoplasm. It carries out the reaction tRNA(Gly) + glycine + ATP = glycyl-tRNA(Gly) + AMP + diphosphate. The protein is Glycine--tRNA ligase alpha subunit of Shouchella clausii (strain KSM-K16) (Alkalihalobacillus clausii).